A 579-amino-acid polypeptide reads, in one-letter code: Adenine/guanine permease AZG1 (579 aa).

Transmembrane regions (helical) follow at residues 52–72 (AGTA…SILS), 131–151 (LIVA…LMAN), 183–203 (TALA…AIGF), 221–241 (AGIG…IGLV), 260–280 (ISLA…AGGS), 292–312 (MESP…YCLV), 320–340 (IYGI…VTAF), 379–399 (FWEA…GTLY), 414–434 (FAGQ…GSLL), 459–479 (AITV…LASI), 480–500 (PAWA…KSVT), and 514–534 (FVTM…IGGI).

It belongs to the nucleobase:cation symporter-2 (NCS2) (TC 2.A.40) family. Azg-like subfamily.

Its subcellular location is the membrane. Functionally, transports natural purines (adenine and guanine) as well as purine analogs. Confers sensitivity to 8-azaadenine and 8-azaguanine (8-azg). This Arabidopsis thaliana (Mouse-ear cress) protein is Adenine/guanine permease AZG1 (AZG1).